We begin with the raw amino-acid sequence, 213 residues long: High frequency lysogenization protein HflD homolog (213 aa).

It belongs to the HflD family.

The protein localises to the cytoplasm. It is found in the cell inner membrane. This is High frequency lysogenization protein HflD homolog from Nitrosococcus oceani (strain ATCC 19707 / BCRC 17464 / JCM 30415 / NCIMB 11848 / C-107).